Reading from the N-terminus, the 297-residue chain is MALNRIVLFYGFTPITDPDAVRLWQRALCEKLGLTGRILISKDGINATVGGELNAVKQYVKTTREYKGFHGIDVKWSDGGAEDFPRLSVKVRDEIVSFGAPGELKVDANGVVGGGTHLKPEELHRLVDAKKERGEEVVFFDGRNAFEAQIGKFKDAIVPDVATTHDFIKELESGKYDALKDKPVVTYCTGGIRCEVLSSLMVNRGFKEVYQLDGGIVRYGETFKDQGLWEGSLYVFDKRMHLEFSDEAKTIGECVRCSAPTSKFENCSNPSCRTLTLYCTECASSPETLRCPEGCAA.

The Rhodanese domain occupies 133 to 228 (RGEEVVFFDG…YGETFKDQGL (96 aa)). The active-site Cysteine persulfide intermediate is Cys188.

Belongs to the TrhO family.

The enzyme catalyses uridine(34) in tRNA + AH2 + O2 = 5-hydroxyuridine(34) in tRNA + A + H2O. Its function is as follows. Catalyzes oxygen-dependent 5-hydroxyuridine (ho5U) modification at position 34 in tRNAs. This chain is tRNA uridine(34) hydroxylase, found in Arthrobacter sp. (strain FB24).